We begin with the raw amino-acid sequence, 309 residues long: Extracellular agarase (309 aa).

A signal peptide (tat-type signal) is located at residues 1-30 (MVNRRDLIKWSAVALGAGAGLAGPAPAAHA). A GH16 domain is found at 33 to 309 (LEWEQYPVPA…YRWVRTYQAV (277 aa)). The active-site Nucleophile is Glu155. Residue Glu160 is the Proton donor of the active site.

It belongs to the glycosyl hydrolase 16 family. In terms of processing, predicted to be exported by the Tat system. The position of the signal peptide cleavage has been experimentally proven.

Its subcellular location is the secreted. The catalysed reaction is Hydrolysis of (1-&gt;4)-beta-D-galactosidic linkages in agarose, giving the tetramer as the predominant product.. In Streptomyces coelicolor (strain ATCC BAA-471 / A3(2) / M145), this protein is Extracellular agarase (dagA).